Consider the following 1575-residue polypeptide: Mediator of RNA polymerase II transcription subunit 1 (1575 aa).

Positions 1 to 670 (MKAQGETEDS…YGSSPLERQN (670 aa)) are interaction with the Mediator complex and THRA. The tract at residues 16–590 (MSSLLERLHA…SIKDRHESVG (575 aa)) is interaction with ESR1. Interaction with the Mediator complex stretches follow at residues 108-212 (FYVE…GYLT) and 215-390 (SGGH…SLQG). The tract at residues 405-644 (PLILNMIRHQ…MAGNTKNHPM (240 aa)) is interaction with THRA. An interaction with VDR region spans residues 542-789 (PASSPGYGMT…TDILSDIAEE (248 aa)). Ser588 carries the post-translational modification Phosphoserine. Residues 604–608 (LTSLL) carry the LXXLL motif 1 motif. Disordered stretches follow at residues 609 to 706 (QITG…QTED), 737 to 760 (HITP…SHPQ), 791 to 818 (SKLP…HSQS), 874 to 895 (SQSG…NDDF), and 951 to 1564 (SGSQ…GEED). A compositionally biased stretch (pro residues) spans 622-632 (PTPPHHTPPPV). The tract at residues 622–701 (PTPPHHTPPP…SSRVPPDKPK (80 aa)) is interaction with GATA1. Residues 622-701 (PTPPHHTPPP…SSRVPPDKPK (80 aa)) form an interaction with PPARGC1A and THRA region. Positions 645–649 (LMNLL) match the LXXLL motif 2 motif. A compositionally biased stretch (polar residues) spans 655-675 (QDFSTLYGSSPLERQNSSSGS). Positions 656 to 1066 (DFSTLYGSSP…TPPIPKITIQ (411 aa)) are interaction with ESR1. Residue Ser664 is modified to Phosphoserine. A compositionally biased stretch (basic and acidic residues) spans 696 to 706 (PPDKPKHQTED). Residue Ser795 is modified to Phosphoserine. Thr805 carries the phosphothreonine modification. The span at 808-818 (RDSSSSGHSQS) shows a compositional bias: polar residues. The Integrase domain-binding motif (IBM) motif lies at 875-902 (QSGFGEEYFDESSQSGDNDDFKGFASQA). 3 positions are modified to phosphoserine: Ser887, Ser953, and Ser955. Basic and acidic residues predominate over residues 963-974 (LGKEKTQKRVKE). The span at 976-986 (NGTGASSGSGP) shows a compositional bias: gly residues. Thr1032 is modified (phosphothreonine; by MAPK1 or MAPK3). The span at 1034–1051 (PTSTGGSKSPGSSGRSQT) shows a compositional bias: low complexity. Phosphothreonine is present on residues Thr1051 and Thr1057. Composition is skewed to low complexity over residues 1078–1094 (SSHS…SSGS) and 1101–1152 (SSSS…SQTG). Position 1158 is a phosphoserine (Ser1158). Positions 1158-1184 (SPITKHGLSSGSSSTKMKPQGKPSSLM) are enriched in polar residues. N6-acetyllysine is present on Lys1179. The span at 1185–1197 (NPSISKPNISPSH) shows a compositional bias: low complexity. Ser1209 is modified (phosphoserine). Thr1217 is modified (phosphothreonine). Composition is skewed to low complexity over residues 1220–1258 (SSKA…GSVS) and 1265–1295 (SNSC…SKGK). The residue at position 1225 (Ser1225) is a Phosphoserine. The tract at residues 1251–1423 (SASSGSVSQK…KPGESGGDGL (173 aa)) is interaction with TP53. 2 positions are modified to phosphoserine: Ser1304 and Ser1349. Positions 1331-1352 (MGASTNSSNHPMSSKHNTSGGE) are enriched in polar residues. Residues 1354-1366 (QSKREKSDKDKSK) show a composition bias toward basic and acidic residues. Residues Ser1405 and Ser1435 each carry the phosphoserine modification. Composition is skewed to polar residues over residues 1427–1442 (IASS…SGST) and 1450–1484 (PSHS…SPSS). A Phosphothreonine modification is found at Thr1442. Thr1459 carries the phosphothreonine; by MAPK1 or MAPK3 modification. Ser1465, Ser1467, Ser1481, Ser1483, and Ser1484 each carry phosphoserine. Residues 1498 to 1507 (KHKKHKKEKK) are compositionally biased toward basic residues. Lys1523 carries the N6-acetyllysine modification. Polar residues predominate over residues 1527 to 1545 (WSKSPISSDPTASVTNNPI).

This sequence belongs to the Mediator complex subunit 1 family. As to quaternary structure, component of the Mediator complex, which is composed of MED1, MED4, MED6, MED7, MED8, MED9, MED10, MED11, MED12, MED13, MED13L, MED14, MED15, MED16, MED17, MED18, MED19, MED20, MED21, MED22, MED23, MED24, MED25, MED26, MED27, MED29, MED30, MED31, CCNC, CDK8 and CDC2L6/CDK11. The MED12, MED13, CCNC and CDK8 subunits form a distinct module termed the CDK8 module. Mediator containing the CDK8 module is less active than Mediator lacking this module in supporting transcriptional activation. Individual preparations of the Mediator complex lacking one or more distinct subunits have been variously termed ARC, CRSP, DRIP, PC2, SMCC and TRAP. This subunit specifically interacts with a number of nuclear receptors in a ligand-dependent fashion including AR, ESR1, ESR2, PPARA, PPARG, RORA, RXRA, RXRG, THRA, THRB and VDR. Interacts with CTNNB1, GABPA, GLI3, PPARGC1A and TP53. Interacts with GATA1 and YWHAH. Interacts with CLOCK; this interaction requires the presence of THRAP3. Interacts with CCAR1. Interacts with NR4A3. Interacts (via IBM motif) with PSIP1 (via IBD domain); phosphorylation increases its affinity for PSIP1. Interacts with USP22. Phosphorylated by MAPK1 or MAPK3 during G2/M phase which may enhance protein stability and promote entry into the nucleolus. Phosphorylation increases its interaction with PSIP1. Widely expressed in the adult, with high levels of expression in the liver, lung, intestinal mucosa, kidney cortex, thymic cortex, splenic follicle and seminiferous epithelium in testis. Also expressed in the adult heart, brain, spleen and skeletal muscle.

The protein resides in the nucleus. Functionally, component of the Mediator complex, a coactivator involved in the regulated transcription of nearly all RNA polymerase II-dependent genes. Mediator functions as a bridge to convey information from gene-specific regulatory proteins to the basal RNA polymerase II transcription machinery. Mediator is recruited to promoters by direct interactions with regulatory proteins and serves as a scaffold for the assembly of a functional preinitiation complex with RNA polymerase II and the general transcription factors. Essential for embryogenesis, including development of the central nervous system, heart, liver and placenta and for erythropoiesis. Also required for normal transcriptional control of thyroid-stimulating hormone beta (TSHB) in the pituitary. Acts as a coactivator for GATA1-mediated transcriptional activation during erythroid differentiation of K562 erythroleukemia cells. The polypeptide is Mediator of RNA polymerase II transcription subunit 1 (Med1) (Mus musculus (Mouse)).